The chain runs to 131 residues: Large ribosomal subunit protein uL24 (131 aa).

The protein belongs to the universal ribosomal protein uL24 family. Part of the 50S ribosomal subunit.

Its function is as follows. One of two assembly initiator proteins, it binds directly to the 5'-end of the 23S rRNA, where it nucleates assembly of the 50S subunit. In terms of biological role, located at the polypeptide exit tunnel on the outside of the subunit. The sequence is that of Large ribosomal subunit protein uL24 from Korarchaeum cryptofilum (strain OPF8).